The following is a 304-amino-acid chain: ULP1-interacting protein 4 (304 aa).

The tract at residues 72-269 (DEYPKEVDEH…SIVKEGDANT (198 aa)) is disordered. Residues 73-83 (EYPKEVDEHSN) show a composition bias toward basic and acidic residues. A compositionally biased stretch (polar residues) spans 129 to 149 (TPSLKGNVTFPSPKTAISQDG). S140 bears the Phosphoserine mark. The segment covering 155-183 (ETTRKERKYEHAPLNEVPVERDPKEENKE) has biased composition (basic and acidic residues). S185 and S205 each carry phosphoserine.

In terms of assembly, interacts with ULP1.

It is found in the endoplasmic reticulum membrane. The protein localises to the mitochondrion outer membrane. It localises to the nucleus envelope. This chain is ULP1-interacting protein 4 (UIP4), found in Saccharomyces cerevisiae (strain ATCC 204508 / S288c) (Baker's yeast).